Reading from the N-terminus, the 333-residue chain is D-fructose 1,6-bisphosphatase class 2/sedoheptulose 1,7-bisphosphatase (333 aa).

Asp33, Glu57, Asp85, and Glu88 together coordinate Mn(2+). Substrate-binding positions include 88-90 (EGT), Tyr119, 164-166 (RAR), and 186-188 (DGD). Mn(2+) is bound at residue Glu213.

Belongs to the FBPase class 2 family. Homotetramer. It depends on Mn(2+) as a cofactor.

It carries out the reaction beta-D-fructose 1,6-bisphosphate + H2O = beta-D-fructose 6-phosphate + phosphate. The catalysed reaction is D-sedoheptulose 1,7-bisphosphate + H2O = D-sedoheptulose 7-phosphate + phosphate. Its pathway is carbohydrate biosynthesis; Calvin cycle. Its function is as follows. Catalyzes the hydrolysis of fructose 1,6-bisphosphate (Fru 1,6-P2) and sedoheptulose 1,7-bisphosphate (Sed 1,7-P2) to fructose 6-phosphate and sedoheptulose 7-phosphate, respectively. This Prochlorococcus marinus subsp. pastoris (strain CCMP1986 / NIES-2087 / MED4) protein is D-fructose 1,6-bisphosphatase class 2/sedoheptulose 1,7-bisphosphatase.